We begin with the raw amino-acid sequence, 291 residues long: Oxidative stress-responsive serine-rich protein 1 (291 aa).

The disordered stretch occupies residues 44-139 (RTTVDDTKPK…STGENSTSLD (96 aa)). The span at 65–83 (STRKSSRGAVRIQRRRRSK) shows a compositional bias: basic residues. 2 stretches are compositionally biased toward polar residues: residues 95 to 113 (CSTT…SQTE) and 127 to 139 (KEFS…TSLD). Phosphothreonine is present on Thr-143.

In terms of tissue distribution, ubiquitous with high level in testis, placenta and cardiac myocytes. Expressed in testis, unpreganant uterus and cardiac myocytes.

This Rattus norvegicus (Rat) protein is Oxidative stress-responsive serine-rich protein 1 (Oser1).